Here is a 410-residue protein sequence, read N- to C-terminus: Cysteine desulfurase IscS (410 aa).

Pyridoxal 5'-phosphate is bound by residues 80–81 (AT), Asn160, Gln188, and 208–210 (SGH). Lys211 is modified (N6-(pyridoxal phosphate)lysine). Thr248 contacts pyridoxal 5'-phosphate. Cys334 (cysteine persulfide intermediate) is an active-site residue. A [2Fe-2S] cluster-binding site is contributed by Cys334.

The protein belongs to the class-V pyridoxal-phosphate-dependent aminotransferase family. NifS/IscS subfamily. Homodimer. Forms a heterotetramer with IscU, interacts with other sulfur acceptors. Pyridoxal 5'-phosphate serves as cofactor.

The protein localises to the cytoplasm. It catalyses the reaction (sulfur carrier)-H + L-cysteine = (sulfur carrier)-SH + L-alanine. The protein operates within cofactor biosynthesis; iron-sulfur cluster biosynthesis. Its function is as follows. Master enzyme that delivers sulfur to a number of partners involved in Fe-S cluster assembly, tRNA modification or cofactor biosynthesis. Catalyzes the removal of elemental sulfur atoms from cysteine to produce alanine. Functions as a sulfur delivery protein for Fe-S cluster synthesis onto IscU, an Fe-S scaffold assembly protein, as well as other S acceptor proteins. The chain is Cysteine desulfurase IscS from Rickettsia prowazekii (strain Madrid E).